Consider the following 320-residue polypeptide: 4-hydroxy-3-methylbut-2-enyl diphosphate reductase (320 aa).

Cys-13 contributes to the [4Fe-4S] cluster binding site. Positions 41 and 75 each coordinate (2E)-4-hydroxy-3-methylbut-2-enyl diphosphate. Positions 41 and 75 each coordinate dimethylallyl diphosphate. His-41 and His-75 together coordinate isopentenyl diphosphate. A [4Fe-4S] cluster-binding site is contributed by Cys-97. His-125 serves as a coordination point for (2E)-4-hydroxy-3-methylbut-2-enyl diphosphate. Dimethylallyl diphosphate is bound at residue His-125. His-125 provides a ligand contact to isopentenyl diphosphate. The active-site Proton donor is Glu-127. Thr-168 lines the (2E)-4-hydroxy-3-methylbut-2-enyl diphosphate pocket. Cys-225 lines the [4Fe-4S] cluster pocket. 4 residues coordinate (2E)-4-hydroxy-3-methylbut-2-enyl diphosphate: Ser-253, Ser-254, Asn-255, and Ser-302. 4 residues coordinate dimethylallyl diphosphate: Ser-253, Ser-254, Asn-255, and Ser-302. Residues Ser-253, Ser-254, Asn-255, and Ser-302 each contribute to the isopentenyl diphosphate site.

The protein belongs to the IspH family. The cofactor is [4Fe-4S] cluster.

The enzyme catalyses isopentenyl diphosphate + 2 oxidized [2Fe-2S]-[ferredoxin] + H2O = (2E)-4-hydroxy-3-methylbut-2-enyl diphosphate + 2 reduced [2Fe-2S]-[ferredoxin] + 2 H(+). The catalysed reaction is dimethylallyl diphosphate + 2 oxidized [2Fe-2S]-[ferredoxin] + H2O = (2E)-4-hydroxy-3-methylbut-2-enyl diphosphate + 2 reduced [2Fe-2S]-[ferredoxin] + 2 H(+). It functions in the pathway isoprenoid biosynthesis; dimethylallyl diphosphate biosynthesis; dimethylallyl diphosphate from (2E)-4-hydroxy-3-methylbutenyl diphosphate: step 1/1. It participates in isoprenoid biosynthesis; isopentenyl diphosphate biosynthesis via DXP pathway; isopentenyl diphosphate from 1-deoxy-D-xylulose 5-phosphate: step 6/6. Its function is as follows. Catalyzes the conversion of 1-hydroxy-2-methyl-2-(E)-butenyl 4-diphosphate (HMBPP) into a mixture of isopentenyl diphosphate (IPP) and dimethylallyl diphosphate (DMAPP). Acts in the terminal step of the DOXP/MEP pathway for isoprenoid precursor biosynthesis. The chain is 4-hydroxy-3-methylbut-2-enyl diphosphate reductase from Chlorobium luteolum (strain DSM 273 / BCRC 81028 / 2530) (Pelodictyon luteolum).